We begin with the raw amino-acid sequence, 348 residues long: Protein RecA (348 aa).

67-74 (GPESSGKT) contacts ATP.

The protein belongs to the RecA family.

The protein resides in the cytoplasm. Its function is as follows. Can catalyze the hydrolysis of ATP in the presence of single-stranded DNA, the ATP-dependent uptake of single-stranded DNA by duplex DNA, and the ATP-dependent hybridization of homologous single-stranded DNAs. It interacts with LexA causing its activation and leading to its autocatalytic cleavage. This chain is Protein RecA, found in Salinispora arenicola (strain CNS-205).